Here is a 201-residue protein sequence, read N- to C-terminus: Ras-related protein Rab-9A (201 aa).

N-acetylalanine is present on A2. G17 contributes to the GDP binding site. GTP contacts are provided by G17, V18, G19, K20, S21, S22, T34, H38, and T39. 4 residues coordinate GDP: G19, K20, S21, and S22. S21 serves as a coordination point for Mg(2+). Residues 31–42 (KFDTQLFHTIGV) carry the Switch 1 motif. T39 and D62 together coordinate Mg(2+). Positions 64–78 (AGQERFRSLRTPFYR) match the Switch 2 motif. GTP contacts are provided by G65, N124, K125, D127, A155, and K156. Residues N124, K125, D127, A155, and K156 each contribute to the GDP site. S179 bears the Phosphoserine mark. T187 bears the Phosphothreonine mark. Residues C200 and C201 are each lipidated (S-geranylgeranyl cysteine).

It belongs to the small GTPase superfamily. Rab family. Interacts (preferentially in its GTP-bound form) with GCC2 (via its GRIP domain). Interacts (GTP-bound form) with SGSM1; the GDP-bound form has much lower affinity for SGSM1. Interacts with SGSM2. The GTP-bound form but not the GDP-bound form interacts with HPS4 and BLOC-3 complex (heterodimer of HPS1 and HPS4) but does not interact with HPS1 alone. Interacts (GTP-bound form) with NDE1; two RAB9A-GTP molecules lie on the opposite sides of the NDE1 homodimer; the interaction leads to RAB9A-dynein motor tethering. Interacts (GTP-bound form) with NDEL1. It depends on Mg(2+) as a cofactor.

The protein localises to the cell membrane. It localises to the endoplasmic reticulum membrane. It is found in the golgi apparatus membrane. Its subcellular location is the late endosome. The protein resides in the cytoplasmic vesicle. The protein localises to the phagosome membrane. It localises to the phagosome. It is found in the cytoplasmic vesicle membrane. Its subcellular location is the melanosome. The enzyme catalyses GTP + H2O = GDP + phosphate + H(+). Its activity is regulated as follows. Regulated by guanine nucleotide exchange factors (GEFs) which promote the exchange of bound GDP for free GTP. Regulated by GTPase activating proteins (GAPs) which increase the GTP hydrolysis activity. Inhibited by GDP dissociation inhibitors (GDIs). Its function is as follows. The small GTPases Rab are key regulators of intracellular membrane trafficking, from the formation of transport vesicles to their fusion with membranes. Rabs cycle between an inactive GDP-bound form and an active GTP-bound form that is able to recruit to membranes different sets of downstream effectors directly responsible for vesicle formation, movement, tethering and fusion. RAB9A is involved in the transport of proteins between the endosomes and the trans-Golgi network (TGN). Specifically uses NDE1/NDEL1 as an effector to interact with the dynein motor complex in order to control retrograde trafficking of RAB9-associated late endosomes to the TGN. Involved in the recruitment of SGSM2 to melanosomes and is required for the proper trafficking of melanogenic enzymes TYR, TYRP1 and DCT/TYRP2 to melanosomes in melanocytes. The sequence is that of Ras-related protein Rab-9A from Homo sapiens (Human).